The sequence spans 299 residues: Bifunctional protein FolD (299 aa).

NADP(+) is bound by residues 168–170, Ser193, and Ile234; that span reads GRS.

Belongs to the tetrahydrofolate dehydrogenase/cyclohydrolase family. Homodimer.

It catalyses the reaction (6R)-5,10-methylene-5,6,7,8-tetrahydrofolate + NADP(+) = (6R)-5,10-methenyltetrahydrofolate + NADPH. The enzyme catalyses (6R)-5,10-methenyltetrahydrofolate + H2O = (6R)-10-formyltetrahydrofolate + H(+). It participates in one-carbon metabolism; tetrahydrofolate interconversion. Functionally, catalyzes the oxidation of 5,10-methylenetetrahydrofolate to 5,10-methenyltetrahydrofolate and then the hydrolysis of 5,10-methenyltetrahydrofolate to 10-formyltetrahydrofolate. This chain is Bifunctional protein FolD, found in Bartonella bacilliformis (strain ATCC 35685 / KC583 / Herrer 020/F12,63).